The following is a 324-amino-acid chain: Protein GET4 (324 aa).

It belongs to the GET4 family. As to quaternary structure, interacts with GET3A.

The protein localises to the cytoplasm. The protein resides in the cytosol. Involved in the regulation of root hair growth. The protein is Protein GET4 of Arabidopsis thaliana (Mouse-ear cress).